We begin with the raw amino-acid sequence, 615 residues long: 9-cis-epoxycarotenoid dioxygenase NCED1, chloroplastic (615 aa).

A chloroplast-targeting transit peptide spans 1–41 (MPSPASNTWINTTLPSSCSSPFKDLASTSSSPTTLLPFKKR). Disordered regions lie at residues 20–45 (SPFK…SSSN) and 62–101 (YQPT…KQPF). Low complexity-rich tracts occupy residues 27–37 (STSSSPTTLLP) and 64–86 (PTST…TTTT). Positions 316, 365, and 430 each coordinate Fe cation. The stretch at 571-592 (KEWKSELQIVNAQNLKLEASIK) forms a coiled coil. Histidine 602 contributes to the Fe cation binding site.

It belongs to the carotenoid oxygenase family. The cofactor is Fe(2+).

It localises to the plastid. Its subcellular location is the chloroplast thylakoid membrane. It carries out the reaction a 9-cis-epoxycarotenoid + O2 = a 12'-apo-carotenal + 2-cis,4-trans-xanthoxin. The catalysed reaction is 9-cis-violaxanthin + O2 = (3S,5R,6S)-5,6-epoxy-3-hydroxy-5,6-dihydro-12'-apo-beta-caroten-12'-al + 2-cis,4-trans-xanthoxin. The enzyme catalyses 9'-cis-neoxanthin + O2 = (3S,5R,6R)-3,5-dihydroxy-6,7-didehydro-5,6-dihydro-12'-apo-beta-caroten-12'-al + 2-cis,4-trans-xanthoxin. In terms of biological role, has a 11,12(11',12') 9-cis epoxycarotenoid cleavage activity. Catalyzes the first step of abscisic-acid biosynthesis from carotenoids, in response to water stress. Active on 9-cis-violaxanthin and 9'-cis-neoxanthin, but not on the all-trans isomers of violaxanthin and neoxanthin. This chain is 9-cis-epoxycarotenoid dioxygenase NCED1, chloroplastic (NCED1), found in Phaseolus vulgaris (Kidney bean).